Here is a 151-residue protein sequence, read N- to C-terminus: Deoxyuridine 5'-triphosphate nucleotidohydrolase (151 aa).

Residues 70–72 (RSG), Asn-83, 87–89 (LID), and Lys-97 contribute to the substrate site.

It belongs to the dUTPase family. Mg(2+) serves as cofactor.

It catalyses the reaction dUTP + H2O = dUMP + diphosphate + H(+). The protein operates within pyrimidine metabolism; dUMP biosynthesis; dUMP from dCTP (dUTP route): step 2/2. Functionally, this enzyme is involved in nucleotide metabolism: it produces dUMP, the immediate precursor of thymidine nucleotides and it decreases the intracellular concentration of dUTP so that uracil cannot be incorporated into DNA. In Idiomarina loihiensis (strain ATCC BAA-735 / DSM 15497 / L2-TR), this protein is Deoxyuridine 5'-triphosphate nucleotidohydrolase.